The primary structure comprises 131 residues: Glycine cleavage system H protein (131 aa).

Residues 24–106 enclose the Lipoyl-binding domain; sequence RAIVGISDHA…YGEGWIMVIE (83 aa). Lys-65 carries the N6-lipoyllysine modification.

Belongs to the GcvH family. As to quaternary structure, the glycine cleavage system is composed of four proteins: P, T, L and H. Requires (R)-lipoate as cofactor.

The glycine cleavage system catalyzes the degradation of glycine. The H protein shuttles the methylamine group of glycine from the P protein to the T protein. This is Glycine cleavage system H protein from Xylella fastidiosa (strain 9a5c).